The primary structure comprises 41 residues: Antifungal peptide 2 (41 aa).

Glutamine 1 is subject to Pyrrolidone carboxylic acid. 5 disulfides stabilise this stretch: cysteine 3/cysteine 17, cysteine 7/cysteine 37, cysteine 11/cysteine 23, cysteine 16/cysteine 30, and cysteine 35/cysteine 39. The Chitin-binding type-1 domain maps to 4–41 (ASRCPRPCNAGLCCSIYGYCGSGAAYCGAGNCRCQCRG).

Monomer.

Its function is as follows. Has antifungal activity against P.infestans, A.lycopersici, V.dahliae, G.zeae, A.nicotianae, F.moniliforme, F.oxysporum and C.gossypii. The polypeptide is Antifungal peptide 2 (Eucommia ulmoides (Hardy rubber tree)).